Here is a 212-residue protein sequence, read N- to C-terminus: Adenylate kinase (212 aa).

10-15 lines the ATP pocket; the sequence is GAGKGT. Residues 30–59 are NMP; the sequence is ALGDIFRTIIKTSTSEAELINNYVKQGELV. Residues Arg-36, 57–59, 85–88, and Gln-92 contribute to the AMP site; these read ELV and GYPR. Positions 122-160 are LID; sequence GRYSCKNCRKIYNSYFLQPKTDNVCDVCGSSTFDYRKDD. Arg-123 contacts ATP. Residues Cys-126 and Cys-129 each contribute to the Zn(2+) site. 132–133 provides a ligand contact to ATP; that stretch reads IY. Zn(2+) contacts are provided by Cys-146 and Cys-149. AMP-binding residues include Arg-157 and Arg-168. Lys-196 serves as a coordination point for ATP.

Belongs to the adenylate kinase family. As to quaternary structure, monomer.

The protein localises to the cytoplasm. It carries out the reaction AMP + ATP = 2 ADP. The protein operates within purine metabolism; AMP biosynthesis via salvage pathway; AMP from ADP: step 1/1. Functionally, catalyzes the reversible transfer of the terminal phosphate group between ATP and AMP. Plays an important role in cellular energy homeostasis and in adenine nucleotide metabolism. The chain is Adenylate kinase from Rickettsia akari (strain Hartford).